We begin with the raw amino-acid sequence, 400 residues long: Elongation factor Tu (400 aa).

One can recognise a tr-type G domain in the interval 10–208 (KPHMNVGTIG…AMDSYFPDPV (199 aa)). A G1 region spans residues 19 to 26 (GHIDHGKT). 19-26 (GHIDHGKT) provides a ligand contact to GTP. Thr26 contacts Mg(2+). The interval 60-64 (GITIN) is G2. A G3 region spans residues 81-84 (DCPG). GTP-binding positions include 81–85 (DCPGH) and 136–139 (NKVD). The G4 stretch occupies residues 136–139 (NKVD). Residues 174-176 (SAL) form a G5 region.

The protein belongs to the TRAFAC class translation factor GTPase superfamily. Classic translation factor GTPase family. EF-Tu/EF-1A subfamily. As to quaternary structure, monomer.

It localises to the cytoplasm. The enzyme catalyses GTP + H2O = GDP + phosphate + H(+). Its function is as follows. GTP hydrolase that promotes the GTP-dependent binding of aminoacyl-tRNA to the A-site of ribosomes during protein biosynthesis. The polypeptide is Elongation factor Tu (Fervidobacterium nodosum (strain ATCC 35602 / DSM 5306 / Rt17-B1)).